A 148-amino-acid chain; its full sequence is MRLHEIYPFQEERKNRKRVGRGGGSGWGGTSGKGHKGQNARSGGGVPAWFEGGQMPLARRLPKRGFKNPFREEYVALNVGQILGAFEGRTEISLEDIYERGLCKKGALVKVLGMGEVSAAVTIEAHRFSASATEKITKAGGTAKALEG.

The tract at residues 12-52 (ERKNRKRVGRGGGSGWGGTSGKGHKGQNARSGGGVPAWFEG) is disordered. Positions 21–32 (RGGGSGWGGTSG) are enriched in gly residues.

The protein belongs to the universal ribosomal protein uL15 family. In terms of assembly, part of the 50S ribosomal subunit.

Binds to the 23S rRNA. The sequence is that of Large ribosomal subunit protein uL15 from Maridesulfovibrio salexigens (strain ATCC 14822 / DSM 2638 / NCIMB 8403 / VKM B-1763) (Desulfovibrio salexigens).